The primary structure comprises 62 residues: Photosystem II reaction center protein Z (62 aa).

The next 2 membrane-spanning stretches (helical) occupy residues 8-28 (AVFALIATSSILLISVPVVFA) and 41-61 (FSGTSLWIGLVFLVGILNSLI).

Belongs to the PsbZ family. PSII is composed of 1 copy each of membrane proteins PsbA, PsbB, PsbC, PsbD, PsbE, PsbF, PsbH, PsbI, PsbJ, PsbK, PsbL, PsbM, PsbT, PsbY, PsbZ, Psb30/Ycf12, at least 3 peripheral proteins of the oxygen-evolving complex and a large number of cofactors. It forms dimeric complexes.

Its subcellular location is the plastid. The protein localises to the chloroplast thylakoid membrane. In terms of biological role, may control the interaction of photosystem II (PSII) cores with the light-harvesting antenna, regulates electron flow through the 2 photosystem reaction centers. PSII is a light-driven water plastoquinone oxidoreductase, using light energy to abstract electrons from H(2)O, generating a proton gradient subsequently used for ATP formation. In Vitis vinifera (Grape), this protein is Photosystem II reaction center protein Z.